We begin with the raw amino-acid sequence, 245 residues long: tRNA pseudouridine synthase A (245 aa).

Catalysis depends on Asp-52, which acts as the Nucleophile. A substrate-binding site is contributed by Tyr-111.

It belongs to the tRNA pseudouridine synthase TruA family. In terms of assembly, homodimer.

It catalyses the reaction uridine(38/39/40) in tRNA = pseudouridine(38/39/40) in tRNA. In terms of biological role, formation of pseudouridine at positions 38, 39 and 40 in the anticodon stem and loop of transfer RNAs. This Rhodopseudomonas palustris (strain HaA2) protein is tRNA pseudouridine synthase A.